The following is a 496-amino-acid chain: Pyrrole-2-carboxylic acid decarboxylase (496 aa).

Trp-166 contacts K(+). 4 residues coordinate prenylated FMN: Val-168, Arg-170, Gln-187, and His-188. A Mn(2+)-binding site is contributed by His-188. Residues Ala-218, Ala-219, Met-221, and Glu-229 each contribute to the K(+) site. Glu-229 lines the prenylated FMN pocket. Glu-229 serves as a coordination point for Mn(2+). Glu-278 acts as the Proton donor in catalysis. His-386 is a binding site for prenylated FMN.

Belongs to the UbiD family. UbiD-like/FDC subfamily. Homodimer. Prenylated FMN is required as a cofactor. It depends on Mn(2+) as a cofactor. The cofactor is K(+).

The catalysed reaction is pyrrole-2-carboxylate + H(+) = 1H-pyrrole + CO2. The enzyme catalyses pyrrole-2-carboxylate + H2O = 1H-pyrrole + hydrogencarbonate. Its activity is regulated as follows. Imidazole acts as a reversible inhibitor via the formation of an imidazole-prenyl-FMN adduct. Activity is light sensitive. Functionally, catalyzes the prenyl-FMN-dependent decarboxylation of pyrrole-2-carboxylate (P2C). Can also catalyze the carboxylation of pyrrole in the presence of elevated concentrations of CO(2) or bicarbonate. Can accept a modest range of heteroaromatic compounds such as 3-methylpyrrole-2-carboxylate, indole-3-carboxylate and furan-2-carboxylate, and shows very low activity with thiophene-2-carboxylate. Attenuates the virulence of P.aeruginosa in a Drosophila model when overexpressed. In Pseudomonas aeruginosa (strain ATCC 15692 / DSM 22644 / CIP 104116 / JCM 14847 / LMG 12228 / 1C / PRS 101 / PAO1), this protein is Pyrrole-2-carboxylic acid decarboxylase.